A 251-amino-acid chain; its full sequence is ATP synthase subunit a (251 aa).

7 consecutive transmembrane segments (helical) span residues 29 to 49, 56 to 73, 87 to 107, 117 to 137, 159 to 181, 192 to 212, and 218 to 238; these read FTQSALYMFAAVGIIALITLV, LVPGRMQSLAEAFYEFIA, FVPLVFSLFMFVLVLNLFGMI, IIVTFMLALVVILTVVIYGFM, LIVAIEVVSFISRPISLSVRLFA, IFAGFVPALLAAGIWGILSPL, and VAITALEMLVAVLQAYVFATL.

It belongs to the ATPase A chain family. In terms of assembly, F-type ATPases have 2 components, CF(1) - the catalytic core - and CF(0) - the membrane proton channel. CF(1) has five subunits: alpha(3), beta(3), gamma(1), delta(1), epsilon(1). CF(0) has three main subunits: a(1), b(2) and c(9-12). The alpha and beta chains form an alternating ring which encloses part of the gamma chain. CF(1) is attached to CF(0) by a central stalk formed by the gamma and epsilon chains, while a peripheral stalk is formed by the delta and b chains.

It localises to the cell inner membrane. Functionally, key component of the proton channel; it plays a direct role in the translocation of protons across the membrane. In Methylobacterium sp. (strain 4-46), this protein is ATP synthase subunit a.